Here is a 303-residue protein sequence, read N- to C-terminus: Uridylate-specific endoribonuclease C (303 aa).

The first 16 residues, 1–16 (MVYLVFLCLLPSLISG), serve as a signal peptide directing secretion. Residues 32-303 (TDAEIQSLAE…KRFVASSYPI (272 aa)) form the EndoU domain. Residues H181, H196, and K239 contribute to the active site. N-linked (GlcNAc...) asparagine glycosylation is present at N287.

Belongs to the ENDOU family. Monomer. It depends on Mn(2+) as a cofactor.

The protein resides in the secreted. The catalysed reaction is ribonucleotidyl-uridine-RNA = a 5'-end dephospho-uridine-RNA + a 3'-end 2',3'-cyclophospho-ribonucleotide-RNA. In terms of biological role, endoribonuclease that cleaves single-stranded RNAs at 5' of uridylates and releases a product with a 2',3'-cyclic phosphate at the 3'-end. This Xenopus laevis (African clawed frog) protein is Uridylate-specific endoribonuclease C (endou-c).